Reading from the N-terminus, the 169-residue chain is MPNHIVLYQPEIPANTGNISRTCAGTDTYLHLIRPLGFSTDDKMLKRAGLDYWDNVKLSYYDSLDEFFEKNEGGEFYYITKFGRHVYSDIDYSDPNKDYFFVFGKETTGLPDALLQKNEENCLRIPMTDHIRSLNLSNTAAILAYEALRQQNFGALLQEPNYDRKIFQD.

S-adenosyl-L-methionine-binding residues include I79, G104, I125, and S133.

Belongs to the class IV-like SAM-binding methyltransferase superfamily. RNA methyltransferase TrmH family. TrmL subfamily.

The protein localises to the cytoplasm. The catalysed reaction is cytidine(34) in tRNA + S-adenosyl-L-methionine = 2'-O-methylcytidine(34) in tRNA + S-adenosyl-L-homocysteine + H(+). The enzyme catalyses 5-carboxymethylaminomethyluridine(34) in tRNA(Leu) + S-adenosyl-L-methionine = 5-carboxymethylaminomethyl-2'-O-methyluridine(34) in tRNA(Leu) + S-adenosyl-L-homocysteine + H(+). Functionally, could methylate the ribose at the nucleotide 34 wobble position in tRNA. The polypeptide is Putative tRNA (cytidine(34)-2'-O)-methyltransferase (Listeria monocytogenes serotype 4b (strain F2365)).